Reading from the N-terminus, the 316-residue chain is Ribosomal RNA small subunit methyltransferase H (316 aa).

Residues 35–37, Asp-55, Phe-79, Asp-101, and Gln-108 contribute to the S-adenosyl-L-methionine site; that span reads GGH.

It belongs to the methyltransferase superfamily. RsmH family.

Its subcellular location is the cytoplasm. The enzyme catalyses cytidine(1402) in 16S rRNA + S-adenosyl-L-methionine = N(4)-methylcytidine(1402) in 16S rRNA + S-adenosyl-L-homocysteine + H(+). Functionally, specifically methylates the N4 position of cytidine in position 1402 (C1402) of 16S rRNA. This Vibrio vulnificus (strain CMCP6) protein is Ribosomal RNA small subunit methyltransferase H.